An 867-amino-acid chain; its full sequence is Putative ubiquitin thioesterase L96 (867 aa).

Disordered regions lie at residues 49 to 73 (VNQY…GKQD), 177 to 204 (IKSV…MKKK), 231 to 271 (YILS…PKYR), and 379 to 591 (LSTQ…YKGG). Basic residues-rich tracts occupy residues 234-258 (SRKK…RSPG) and 421-430 (KITRKPKSPR). Low complexity-rich tracts occupy residues 433 to 462 (PPAS…SVRA) and 472 to 551 (PPSS…KSPS). Positions 565-575 (ITVDPSVTPPS) are enriched in polar residues. Basic and acidic residues predominate over residues 582 to 591 (RPELPEYKGG). Positions 606–745 (YKVIPVKGDG…DYHYTALTPL (140 aa)) constitute an OTU domain. Residue Asp614 is part of the active site. The active-site Nucleophile is the Cys617. His738 is a catalytic residue.

It catalyses the reaction Thiol-dependent hydrolysis of ester, thioester, amide, peptide and isopeptide bonds formed by the C-terminal Gly of ubiquitin (a 76-residue protein attached to proteins as an intracellular targeting signal).. Hydrolase that can remove conjugated ubiquitin from proteins and may therefore play an important regulatory role at the level of protein turnover by preventing degradation. May be involved in TIV genomic DNA packaging in a manner related to the Gag polyproteins of the mammalian viruses. This chain is Putative ubiquitin thioesterase L96, found in Tipula iridescent virus (TIV).